The sequence spans 269 residues: Expansin-A32 (269 aa).

Residues 1–25 form the signal peptide; that stretch reads MWCTWALGRVVLAVVFLVALAAGDA. The Expansin-like EG45 domain occupies 60–174; sequence DGACGYKDTS…RRVPCVKVGG (115 aa). One can recognise an Expansin-like CBD domain in the interval 184 to 264; that stretch reads YFNLVMVSNV…DWQFGVTYQA (81 aa).

The protein belongs to the expansin family. Expansin A subfamily.

The protein localises to the secreted. It localises to the cell wall. It is found in the membrane. Functionally, may cause loosening and extension of plant cell walls by disrupting non-covalent bonding between cellulose microfibrils and matrix glucans. No enzymatic activity has been found. May be required for rapid internodal elongation in deepwater rice during submergence. The chain is Expansin-A32 (EXPA32) from Oryza sativa subsp. japonica (Rice).